The sequence spans 1000 residues: UPF0182 protein SCO5204 (1000 aa).

7 helical membrane passes run 26–48, 70–92, 121–143, 177–199, 220–237, 267–289, and 296–318; these read LLLT…GFWT, IGLF…WLAH, WLLL…GQWR, FLLG…THYL, LSVL…AYWL, LPAK…ATLW, and PVIG…PALV. Disordered regions lie at residues 884–908 and 943–1000; these read AETE…NPTV and EALQ…ADTG. Residues 888 to 897 are compositionally biased toward acidic residues; it reads QPPDEGDDTT. 2 stretches are compositionally biased toward basic and acidic residues: residues 943-953 and 963-984; these read EALQRAEDAQA and NGDD…DKAG.

The protein belongs to the UPF0182 family.

It is found in the cell membrane. This chain is UPF0182 protein SCO5204, found in Streptomyces coelicolor (strain ATCC BAA-471 / A3(2) / M145).